The primary structure comprises 1700 residues: uncharacterized protein (1700 aa).

Residues 986-1006 form a helical membrane-spanning segment; sequence APITQYPVLCYLLYLLSYYLV. Coiled coils occupy residues 1246–1278 and 1657–1684; these read DQNA…REIK and QDMD…IEGD. The segment at 1650–1700 is disordered; sequence DTEPDIMQDMDGEPQEADELEDLKEEAESLDIEGDYFAEEDEDYAQEDFIE. Positions 1651–1700 are enriched in acidic residues; sequence TEPDIMQDMDGEPQEADELEDLKEEAESLDIEGDYFAEEDEDYAQEDFIE.

It is found in the host membrane. The protein localises to the virion. This is an uncharacterized protein from Acanthamoeba polyphaga (Amoeba).